We begin with the raw amino-acid sequence, 281 residues long: Energy-coupling factor transporter ATP-binding protein EcfA1 (281 aa).

In terms of domain architecture, ABC transporter spans 6 to 245 (IKSEDLVFKY…VEKIKSIGLD (240 aa)). 44–51 (GHNGSGKS) is an ATP binding site.

Belongs to the ABC transporter superfamily. Energy-coupling factor EcfA family. In terms of assembly, forms a stable energy-coupling factor (ECF) transporter complex composed of 2 membrane-embedded substrate-binding proteins (S component), 2 ATP-binding proteins (A component) and 2 transmembrane proteins (T component).

The protein localises to the cell membrane. Its function is as follows. ATP-binding (A) component of a common energy-coupling factor (ECF) ABC-transporter complex. Unlike classic ABC transporters this ECF transporter provides the energy necessary to transport a number of different substrates. This is Energy-coupling factor transporter ATP-binding protein EcfA1 from Clostridium perfringens (strain ATCC 13124 / DSM 756 / JCM 1290 / NCIMB 6125 / NCTC 8237 / Type A).